The sequence spans 513 residues: Maturase K (513 aa).

This sequence belongs to the intron maturase 2 family. MatK subfamily.

Its subcellular location is the plastid. The protein localises to the chloroplast. Usually encoded in the trnK tRNA gene intron. Probably assists in splicing its own and other chloroplast group II introns. In Phaseolus vulgaris (Kidney bean), this protein is Maturase K.